The sequence spans 189 residues: Small ribosomal subunit protein uS5 (189 aa).

An S5 DRBM domain is found at Phe-22–Val-85.

Belongs to the universal ribosomal protein uS5 family. In terms of assembly, part of the 30S ribosomal subunit. Contacts proteins S4 and S8.

Functionally, with S4 and S12 plays an important role in translational accuracy. Its function is as follows. Located at the back of the 30S subunit body where it stabilizes the conformation of the head with respect to the body. This is Small ribosomal subunit protein uS5 from Allorhizobium ampelinum (strain ATCC BAA-846 / DSM 112012 / S4) (Agrobacterium vitis (strain S4)).